The sequence spans 604 residues: Vacuolar protein sorting-associated protein 64 (604 aa).

The tract at residues 1 to 89 (MVELEKRRRP…SVHQVSQQQQ (89 aa)) is disordered. At 1 to 578 (MVELEKRRRP…LGVVEGKRTR (578 aa)) the chain is on the cytoplasmic side. The segment covering 22-34 (DQSNSQGMTKTPE) has biased composition (polar residues). Composition is skewed to low complexity over residues 44 to 57 (RARSNSRSSGSRSN) and 77 to 89 (SPPSVHQVSQQQQ). The region spanning 185–257 (LKLGRPVTNS…NGTFVNGVKI (73 aa)) is the FHA domain. Residues 404 to 563 (NLINMIKTLT…EEKKDTEDTL (160 aa)) adopt a coiled-coil conformation. Positions 539–561 (INNDNNAKVKQNDSREEKKDTED) are disordered. Positions 548-560 (KQNDSREEKKDTE) are enriched in basic and acidic residues. A helical; Anchor for type IV membrane protein transmembrane segment spans residues 579–598 (VSKGMLFGVVAISFGLVATA). At 599-604 (VKQLPQ) the chain is on the lumenal side.

As to quaternary structure, component of a complex at least composed of FAR3, FAR7, FAR8, FAR10, FAR11 and VPS64.

Its subcellular location is the endoplasmic reticulum membrane. Its function is as follows. Participates in the control of the reentry into the cell cycle following pheromone treatment. Involved in vacuolar protein sorting. This chain is Vacuolar protein sorting-associated protein 64 (VPS64), found in Saccharomyces cerevisiae (strain ATCC 204508 / S288c) (Baker's yeast).